An 80-amino-acid polypeptide reads, in one-letter code: WAP four-disulfide core domain protein 15A (80 aa).

Residues 1-20 form the signal peptide; the sequence is MKPSSLLLFTTTILLCLSMA. Positions 29-76 constitute a WAP domain; it reads VTPKQGYCPEFLLDCPFVLLPVCSRDKGCKGTKKCCFYYCQMRCVEPW. Intrachain disulfides connect Cys-36-Cys-64, Cys-43-Cys-68, Cys-51-Cys-63, and Cys-57-Cys-72.

Its subcellular location is the secreted. In terms of biological role, antibacterial protein. This is WAP four-disulfide core domain protein 15A from Mus musculus (Mouse).